A 130-amino-acid polypeptide reads, in one-letter code: Probable pilin MJ0835.1 (130 aa).

The propeptide occupies 1-14 (MNTMENKIIKSKKA). The QXSXEXXXL signature appears at 15 to 23 (QVSLEFSFL).

The N-terminus is cleaved by the prepilin peptidase EppA, which recognizes the class III signal sequence.

The protein resides in the secreted. The protein localises to the cell surface. Its subcellular location is the fimbrium. The protein is Probable pilin MJ0835.1 of Methanocaldococcus jannaschii (strain ATCC 43067 / DSM 2661 / JAL-1 / JCM 10045 / NBRC 100440) (Methanococcus jannaschii).